The primary structure comprises 469 residues: Protein C-ets-2 (469 aa).

One can recognise a PNT domain in the interval 85-170 (ATFSGFKKEQ…EHLEQMIKEN (86 aa)). Phosphoserine occurs at positions 220 and 225. The interval 264–289 (NLLTNNSGTPKDHDSPENGADSFESS) is disordered. Residues serine 295, serine 298, and serine 301 each carry the phosphoserine modification. Residues 363 to 443 (IQLWQFLLEL…SGKRYVYRFV (81 aa)) constitute a DNA-binding region (ETS).

The protein belongs to the ETS family. Phosphorylation by CDK10 at Ser-220 and Ser-225 creates a phosphodegron that targets ETS2 for proteasomal degradation.

The protein localises to the nucleus. Transcription factor activating transcription. Binds specifically the DNA GGAA/T core motif (Ets-binding site or EBS) in gene promoters and stimulates transcription. The protein is Protein C-ets-2 (ETS2) of Homo sapiens (Human).